The primary structure comprises 293 residues: DNA repair protein RecO (293 aa).

This sequence belongs to the RecO family.

Involved in DNA repair and RecF pathway recombination. The protein is DNA repair protein RecO of Acaryochloris marina (strain MBIC 11017).